Consider the following 88-residue polypeptide: Gene 86 protein (88 aa).

The disordered stretch occupies residues 64-88 (WRGNPSAYDDEVGDLEGFETQHSDY). Residues 71–80 (YDDEVGDLEG) are compositionally biased toward acidic residues.

This is Gene 86 protein (86) from Mycobacterium (Mycobacteriophage L5).